We begin with the raw amino-acid sequence, 418 residues long: Tubulin alpha chain (418 aa).

Glutamine 11, glutamate 71, serine 140, glycine 144, threonine 179, asparagine 206, and asparagine 228 together coordinate GTP. Glutamate 71 provides a ligand contact to Mg(2+). The active site involves glutamate 255.

It belongs to the tubulin family. In terms of assembly, dimer of alpha and beta chains. A typical microtubule is a hollow water-filled tube with an outer diameter of 25 nm and an inner diameter of 15 nM. Alpha-beta heterodimers associate head-to-tail to form protofilaments running lengthwise along the microtubule wall with the beta-tubulin subunit facing the microtubule plus end conferring a structural polarity. Microtubules usually have 13 protofilaments but different protofilament numbers can be found in some organisms and specialized cells. Mg(2+) serves as cofactor.

The protein localises to the cytoplasm. Its subcellular location is the cytoskeleton. The catalysed reaction is GTP + H2O = GDP + phosphate + H(+). Tubulin is the major constituent of microtubules, a cylinder consisting of laterally associated linear protofilaments composed of alpha- and beta-tubulin heterodimers. Microtubules grow by the addition of GTP-tubulin dimers to the microtubule end, where a stabilizing cap forms. Below the cap, tubulin dimers are in GDP-bound state, owing to GTPase activity of alpha-tubulin. The sequence is that of Tubulin alpha chain (TUB1) from Ajellomyces capsulatus (Darling's disease fungus).